Reading from the N-terminus, the 369-residue chain is Protein V (369 aa).

2 disordered regions span residues 1–23 (MDQD…GGRE) and 54–320 (INTL…GHRR). Composition is skewed to basic and acidic residues over residues 7-20 (ISKE…EASG), 99-110 (AEAHARNVDKQN), 150-168 (GAED…RGED), and 175-193 (EEIR…RADN). Phosphoserine; by host occurs at positions 249, 257, and 260. Residues H318, C337, C341, C353, C355, C358, C362, and C365 each coordinate Zn(2+).

It belongs to the paramyxoviruses V protein family. Interacts with host IFIH1/MDA5 and DHX58/LGP2. Interacts with host IRF3. Interacts with host RIGI regulatory protein (via CARDs domain) and host TRIM25 (via SPRY domain); these interactions prevent TRIM25-mediated ubiquitination of RIG-I and disrupts downstream RIG-I signaling.

The protein resides in the host cytoplasm. Its function is as follows. Plays an essential role in the inhibition of host immune response. Prevents the establishment of cellular antiviral state by blocking interferon-alpha/beta (IFN-alpha/beta) production and signaling pathway. Interacts with host IFIH1/MDA5 and DHX58/LGP2 to inhibit the transduction pathway involved in the activation of IFN-beta promoter, thus protecting the virus against cell antiviral state. Also interacts with and inhibits host IRF3. Blocks the type I interferon signaling pathway by disrupting the RIG-I signaling pathway. The sequence is that of Protein V (P/V/C) from Cavia cutleri (Guinea pig).